The chain runs to 332 residues: 2,3-bisphosphoglycerate-dependent phosphoglycerate mutase 2 (332 aa).

A chloroplast-targeting transit peptide spans 1-48 (MATSTTMSHQAIGSVVSQRPFKASQFLKEPLNNVPMKFRQKRFKIEAT). Substrate contacts are provided by residues 85–92 (RHGESLWN), 98–99 (TG), Arg135, 189–192 (ERMY), Lys200, 216–217 (RR), and 260–261 (GN). The Tele-phosphohistidine intermediate role is filled by His86. Glu189 (proton donor/acceptor) is an active-site residue.

Belongs to the phosphoglycerate mutase family. BPG-dependent PGAM subfamily.

The protein localises to the plastid. The protein resides in the chloroplast. It carries out the reaction (2R)-2-phosphoglycerate = (2R)-3-phosphoglycerate. It functions in the pathway carbohydrate degradation; glycolysis; pyruvate from D-glyceraldehyde 3-phosphate: step 3/5. Catalyzes the interconversion of 2-phosphoglycerate and 3-phosphoglycerate. The chain is 2,3-bisphosphoglycerate-dependent phosphoglycerate mutase 2 from Arabidopsis thaliana (Mouse-ear cress).